The sequence spans 237 residues: Ubiquinone biosynthesis O-methyltransferase (237 aa).

Residues arginine 38, glycine 57, aspartate 78, and methionine 122 each coordinate S-adenosyl-L-methionine.

This sequence belongs to the methyltransferase superfamily. UbiG/COQ3 family.

It carries out the reaction a 3-demethylubiquinol + S-adenosyl-L-methionine = a ubiquinol + S-adenosyl-L-homocysteine + H(+). The catalysed reaction is a 3-(all-trans-polyprenyl)benzene-1,2-diol + S-adenosyl-L-methionine = a 2-methoxy-6-(all-trans-polyprenyl)phenol + S-adenosyl-L-homocysteine + H(+). The protein operates within cofactor biosynthesis; ubiquinone biosynthesis. Its function is as follows. O-methyltransferase that catalyzes the 2 O-methylation steps in the ubiquinone biosynthetic pathway. This is Ubiquinone biosynthesis O-methyltransferase from Methylococcus capsulatus (strain ATCC 33009 / NCIMB 11132 / Bath).